The following is a 500-amino-acid chain: NAD(P)H-quinone oxidoreductase chain 4, chloroplastic (500 aa).

14 helical membrane-spanning segments follow: residues 4–24 (FPWLTIIVVFPISAGSLMLFL), 35–55 (YTICICILELLITTYAFCYNF), 87–107 (IGTILLTGFITTLATLAAFPV), 113–130 (LFHFLMLAMYSGQIGSFS), 134–154 (LLLFFIMWELELIPVYLLLSM), 167–187 (FILYTAGSSIFLLIGVLGISL), 211–231 (IILYIGFLIAFAVKSPLIPLH), 242–262 (HYSTCMLLAGILLKMGAYGLV), 272–292 (AHSLFSPWLMVVGTIQIIYAA), 305–325 (IAYSSVSHMGFIIIGIASITD), 330–350 (GAILQIISHGFIGAALFFLAG), 386–406 (LALPGMSGFVAEFIVFFGIIT), 416–436 (IFIIVVMAIGMILTPIYLLSM), and 462–482 (LFLSISSLLPIIGMGIYPDFV).

This sequence belongs to the complex I subunit 4 family.

The protein resides in the plastid. The protein localises to the chloroplast thylakoid membrane. The catalysed reaction is a plastoquinone + NADH + (n+1) H(+)(in) = a plastoquinol + NAD(+) + n H(+)(out). It catalyses the reaction a plastoquinone + NADPH + (n+1) H(+)(in) = a plastoquinol + NADP(+) + n H(+)(out). This is NAD(P)H-quinone oxidoreductase chain 4, chloroplastic from Aethionema cordifolium (Lebanon stonecress).